The sequence spans 365 residues: tRNA N6-adenosine threonylcarbamoyltransferase (365 aa).

Fe cation is bound by residues His-119 and His-123. Substrate contacts are provided by residues 141–145 (LVSGG), Asp-174, Gly-187, and Asn-288. Asp-316 contributes to the Fe cation binding site.

It belongs to the KAE1 / TsaD family. Fe(2+) serves as cofactor.

Its subcellular location is the cytoplasm. It catalyses the reaction L-threonylcarbamoyladenylate + adenosine(37) in tRNA = N(6)-L-threonylcarbamoyladenosine(37) in tRNA + AMP + H(+). Required for the formation of a threonylcarbamoyl group on adenosine at position 37 (t(6)A37) in tRNAs that read codons beginning with adenine. Is involved in the transfer of the threonylcarbamoyl moiety of threonylcarbamoyl-AMP (TC-AMP) to the N6 group of A37, together with TsaE and TsaB. TsaD likely plays a direct catalytic role in this reaction. The sequence is that of tRNA N6-adenosine threonylcarbamoyltransferase from Rhizobium johnstonii (strain DSM 114642 / LMG 32736 / 3841) (Rhizobium leguminosarum bv. viciae).